We begin with the raw amino-acid sequence, 110 residues long: Large ribosomal subunit protein uL22 (110 aa).

Belongs to the universal ribosomal protein uL22 family. As to quaternary structure, part of the 50S ribosomal subunit.

Its function is as follows. This protein binds specifically to 23S rRNA; its binding is stimulated by other ribosomal proteins, e.g. L4, L17, and L20. It is important during the early stages of 50S assembly. It makes multiple contacts with different domains of the 23S rRNA in the assembled 50S subunit and ribosome. Functionally, the globular domain of the protein is located near the polypeptide exit tunnel on the outside of the subunit, while an extended beta-hairpin is found that lines the wall of the exit tunnel in the center of the 70S ribosome. The chain is Large ribosomal subunit protein uL22 from Maridesulfovibrio salexigens (strain ATCC 14822 / DSM 2638 / NCIMB 8403 / VKM B-1763) (Desulfovibrio salexigens).